A 273-amino-acid chain; its full sequence is NAD-dependent protein deacylase (273 aa).

Positions arginine 20–glycine 272 constitute a Deacetylase sirtuin-type domain. Glycine 48–tryptophan 67 contacts NAD(+). The substrate site is built by tyrosine 92 and arginine 95. Glutamine 129 to aspartate 132 is an NAD(+) binding site. Histidine 147 acts as the Proton acceptor in catalysis. 2 residues coordinate Zn(2+): cysteine 155 and cysteine 174. NAD(+) is bound by residues glycine 214–serine 216, asparagine 240–glutamate 242, and alanine 258.

The protein belongs to the sirtuin family. Class III subfamily. The cofactor is Zn(2+).

Its subcellular location is the cytoplasm. It catalyses the reaction N(6)-acetyl-L-lysyl-[protein] + NAD(+) + H2O = 2''-O-acetyl-ADP-D-ribose + nicotinamide + L-lysyl-[protein]. The catalysed reaction is N(6)-succinyl-L-lysyl-[protein] + NAD(+) + H2O = 2''-O-succinyl-ADP-D-ribose + nicotinamide + L-lysyl-[protein]. The enzyme catalyses N(6)-(2-hydroxyisobutanoyl)-L-lysyl-[protein] + NAD(+) + H2O = 2''-O-(2-hydroxyisobutanoyl)-ADP-D-ribose + nicotinamide + L-lysyl-[protein]. Its function is as follows. NAD-dependent lysine deacetylase that specifically removes acetyl groups on target proteins. Also acts as a protein-lysine deacylase by mediating protein desuccinylation and de-2-hydroxyisobutyrylation. Modulates the activities of several proteins which are inactive in their acylated form. This Escherichia coli O6:H1 (strain CFT073 / ATCC 700928 / UPEC) protein is NAD-dependent protein deacylase.